The primary structure comprises 783 residues: Cation/H(+) antiporter 11 (783 aa).

12 consecutive transmembrane segments (helical) span residues 31–51 (VVFG…FFCI), 61–81 (IGVS…PQLF), 101–120 (AALR…LMTV), 135–155 (VVIG…LNLF), 175–195 (VIVI…LLEL), 205–225 (LALS…IVAT), 244–264 (AVII…QWII), 276–295 (IYIH…FVFF), 300–322 (VLGP…ALEA), 360–380 (IFLT…LCLY), 389–409 (LAVS…YEAV), and 418–438 (ATYA…PMVV).

This sequence belongs to the monovalent cation:proton antiporter 2 (CPA2) transporter (TC 2.A.37) family. CHX (TC 2.A.37.4) subfamily. In terms of tissue distribution, specifically expressed in pollen.

It is found in the membrane. Its function is as follows. May operate as a cation/H(+) antiporter. In Arabidopsis thaliana (Mouse-ear cress), this protein is Cation/H(+) antiporter 11 (CHX11).